Reading from the N-terminus, the 334-residue chain is Malate dehydrogenase (334 aa).

Residue 16-22 coordinates NAD(+); that stretch reads GAAGQIA. Substrate-binding residues include R97 and R103. NAD(+)-binding positions include N110, Q117, and 134 to 136; that span reads VGN. 2 residues coordinate substrate: N136 and R167. Catalysis depends on H192, which acts as the Proton acceptor.

This sequence belongs to the LDH/MDH superfamily. MDH type 2 family.

It catalyses the reaction (S)-malate + NAD(+) = oxaloacetate + NADH + H(+). Catalyzes the reversible oxidation of malate to oxaloacetate. In Nocardia farcinica (strain IFM 10152), this protein is Malate dehydrogenase.